We begin with the raw amino-acid sequence, 281 residues long: NADPH-dependent 7-cyano-7-deazaguanine reductase (281 aa).

81-83 (VES) is a substrate binding site. Position 83 to 84 (83 to 84 (SK)) interacts with NADPH. Cysteine 188 acts as the Thioimide intermediate in catalysis. The active-site Proton donor is aspartate 195. 227–228 (HE) serves as a coordination point for substrate. 256-257 (RG) contributes to the NADPH binding site.

Belongs to the GTP cyclohydrolase I family. QueF type 2 subfamily. As to quaternary structure, homodimer.

The protein localises to the cytoplasm. The enzyme catalyses 7-aminomethyl-7-carbaguanine + 2 NADP(+) = 7-cyano-7-deazaguanine + 2 NADPH + 3 H(+). It functions in the pathway tRNA modification; tRNA-queuosine biosynthesis. Catalyzes the NADPH-dependent reduction of 7-cyano-7-deazaguanine (preQ0) to 7-aminomethyl-7-deazaguanine (preQ1). This is NADPH-dependent 7-cyano-7-deazaguanine reductase from Acidovorax ebreus (strain TPSY) (Diaphorobacter sp. (strain TPSY)).